We begin with the raw amino-acid sequence, 616 residues long: Chaperone protein HtpG (616 aa).

The a; substrate-binding stretch occupies residues 1 to 334 (MAEKQIHTFQ…TADLPLNVSR (334 aa)). The tract at residues 335 to 549 (EILQGNKVVD…ENEMGGNMER (215 aa)) is b. The interval 550–616 (IMKSLGQDVP…FVKRINKLIN (67 aa)) is c.

This sequence belongs to the heat shock protein 90 family. In terms of assembly, homodimer.

It localises to the cytoplasm. Its function is as follows. Molecular chaperone. Has ATPase activity. The sequence is that of Chaperone protein HtpG from Ruthia magnifica subsp. Calyptogena magnifica.